The sequence spans 458 residues: Adenylosuccinate synthetase (458 aa).

GTP contacts are provided by residues 11-17 (GDEGKGG) and 39-41 (GHT). D12 (proton acceptor) is an active-site residue. Residues D12 and G39 each coordinate Mg(2+). IMP-binding positions include 12–15 (DEGK), 37–40 (NAGH), T127, R141, Q232, T247, and R330. H40 functions as the Proton donor in the catalytic mechanism. 326–332 (TVTGRPR) provides a ligand contact to substrate. GTP contacts are provided by residues R332, 358–360 (HLD), and 443–445 (GVG).

It belongs to the adenylosuccinate synthetase family. In terms of assembly, homodimer. The cofactor is Mg(2+).

The protein localises to the cytoplasm. The enzyme catalyses IMP + L-aspartate + GTP = N(6)-(1,2-dicarboxyethyl)-AMP + GDP + phosphate + 2 H(+). Its pathway is purine metabolism; AMP biosynthesis via de novo pathway; AMP from IMP: step 1/2. Plays an important role in the de novo pathway of purine nucleotide biosynthesis. Catalyzes the first committed step in the biosynthesis of AMP from IMP. This Haloarcula marismortui (strain ATCC 43049 / DSM 3752 / JCM 8966 / VKM B-1809) (Halobacterium marismortui) protein is Adenylosuccinate synthetase.